A 556-amino-acid polypeptide reads, in one-letter code: Formate--tetrahydrofolate ligase (556 aa).

Position 65 to 72 (65 to 72) interacts with ATP; it reads TPAGEGKT.

This sequence belongs to the formate--tetrahydrofolate ligase family.

It catalyses the reaction (6S)-5,6,7,8-tetrahydrofolate + formate + ATP = (6R)-10-formyltetrahydrofolate + ADP + phosphate. Its pathway is one-carbon metabolism; tetrahydrofolate interconversion. This is Formate--tetrahydrofolate ligase from Ruminiclostridium cellulolyticum (strain ATCC 35319 / DSM 5812 / JCM 6584 / H10) (Clostridium cellulolyticum).